We begin with the raw amino-acid sequence, 200 residues long: Non-specific lipid transfer protein GPI-anchored 16 (200 aa).

The N-terminal stretch at 1-20 (MEGLTLIVVMMSSFMLGGQG) is a signal peptide. 4 disulfide bridges follow: cysteine 27-cysteine 72, cysteine 38-cysteine 56, cysteine 57-cysteine 98, and cysteine 70-cysteine 107. An N-linked (GlcNAc...) asparagine glycan is attached at asparagine 87. Residues 134–182 (SPGASKAAGTTPTQAPAPDTPADGPTGPTTKSGIRPVDQPMQPTGLAQS) are disordered. The segment covering 140 to 163 (AAGTTPTQAPAPDTPADGPTGPTT) has biased composition (low complexity). The GPI-anchor amidated threonine moiety is linked to residue threonine 177. The propeptide at 178–200 (GLAQSSTSPFLPLLFISLILLNL) is removed in mature form.

This sequence belongs to the plant LTP family. Expressed in seedlings, preferentially in hypocotyls and roots. Also observed in siliques.

It is found in the cell membrane. Essential protein involved in female gametophyte development. Probable lipid transfer protein. The protein is Non-specific lipid transfer protein GPI-anchored 16 of Arabidopsis thaliana (Mouse-ear cress).